Reading from the N-terminus, the 257-residue chain is Imidazole glycerol phosphate synthase subunit HisF (257 aa).

Active-site residues include Asp11 and Asp130.

This sequence belongs to the HisA/HisF family. In terms of assembly, heterodimer of HisH and HisF.

It localises to the cytoplasm. It catalyses the reaction 5-[(5-phospho-1-deoxy-D-ribulos-1-ylimino)methylamino]-1-(5-phospho-beta-D-ribosyl)imidazole-4-carboxamide + L-glutamine = D-erythro-1-(imidazol-4-yl)glycerol 3-phosphate + 5-amino-1-(5-phospho-beta-D-ribosyl)imidazole-4-carboxamide + L-glutamate + H(+). It functions in the pathway amino-acid biosynthesis; L-histidine biosynthesis; L-histidine from 5-phospho-alpha-D-ribose 1-diphosphate: step 5/9. IGPS catalyzes the conversion of PRFAR and glutamine to IGP, AICAR and glutamate. The HisF subunit catalyzes the cyclization activity that produces IGP and AICAR from PRFAR using the ammonia provided by the HisH subunit. The chain is Imidazole glycerol phosphate synthase subunit HisF from Shewanella loihica (strain ATCC BAA-1088 / PV-4).